The sequence spans 619 residues: DEAD-box ATP-dependent RNA helicase 35B (619 aa).

Low complexity-rich tracts occupy residues 1-10 and 49-58; these read MAAAAAAAAA and PPTTNAVAVA. Residues 1–72 form a disordered region; sequence MAAAAAAAAA…PPRSTSSPAV (72 aa). The Q motif signature appears at 173–201; that stretch reads RSFGDLRLPEPILRALRGKGIEKPTPIQV. The 185-residue stretch at 204–388 folds into the Helicase ATP-binding domain; the sequence is LPVALSGRDM…KSALVKPIIV (185 aa). 217–224 contributes to the ATP binding site; it reads AFTGSGKT. Residues 336-339 carry the DEAD box motif; it reads DEAD. Positions 399–559 constitute a Helicase C-terminal domain; it reads DVIQEVEYVK…RLPPILADLD (161 aa). The segment at 576-593 adopts a CCHC-type zinc-finger fold; the sequence is KGCAFCGGLGHRIEACPK.

It belongs to the DEAD box helicase family. DDX41 subfamily.

The enzyme catalyses ATP + H2O = ADP + phosphate + H(+). The sequence is that of DEAD-box ATP-dependent RNA helicase 35B from Oryza sativa subsp. japonica (Rice).